Consider the following 164-residue polypeptide: HTH-type transcriptional regulator IscR (164 aa).

The region spanning Arg2–Lys131 is the HTH rrf2-type domain. Residues Leu28–Lys51 constitute a DNA-binding region (H-T-H motif). The [2Fe-2S] cluster site is built by Cys92, Cys98, and Cys104. Residues Asp140 to Ala164 are disordered. Over residues Gly152 to Ala164 the composition is skewed to polar residues.

Requires [2Fe-2S] cluster as cofactor.

Its function is as follows. Regulates the transcription of several operons and genes involved in the biogenesis of Fe-S clusters and Fe-S-containing proteins. The protein is HTH-type transcriptional regulator IscR of Xenorhabdus nematophila (strain ATCC 19061 / DSM 3370 / CCUG 14189 / LMG 1036 / NCIMB 9965 / AN6).